A 118-amino-acid chain; its full sequence is Ribonuclease P protein component 4 (118 aa).

4 residues coordinate Zn(2+): cysteine 59, cysteine 62, cysteine 85, and cysteine 88.

Belongs to the eukaryotic/archaeal RNase P protein component 4 family. As to quaternary structure, consists of a catalytic RNA component and at least 4-5 protein subunits. It depends on Zn(2+) as a cofactor.

The protein resides in the cytoplasm. The enzyme catalyses Endonucleolytic cleavage of RNA, removing 5'-extranucleotides from tRNA precursor.. In terms of biological role, part of ribonuclease P, a protein complex that generates mature tRNA molecules by cleaving their 5'-ends. This Sulfolobus acidocaldarius (strain ATCC 33909 / DSM 639 / JCM 8929 / NBRC 15157 / NCIMB 11770) protein is Ribonuclease P protein component 4.